The primary structure comprises 291 residues: Beta-lactamase CTX-M-4 (291 aa).

A signal peptide spans 1–28 (MMTQSIRRSMLTVMATLPLLFSSATLHA). Residue serine 73 is the Acyl-ester intermediate of the active site. 237–239 (KTG) lines the substrate pocket.

The protein belongs to the class-A beta-lactamase family.

The catalysed reaction is a beta-lactam + H2O = a substituted beta-amino acid. Has cefotaxime-hydrolyzing activity. In Salmonella typhimurium, this protein is Beta-lactamase CTX-M-4 (bla).